The following is a 525-amino-acid chain: ATP synthase subunit alpha (525 aa).

169–176 is an ATP binding site; that stretch reads GDRQTGKT.

The protein belongs to the ATPase alpha/beta chains family. As to quaternary structure, F-type ATPases have 2 components, CF(1) - the catalytic core - and CF(0) - the membrane proton channel. CF(1) has five subunits: alpha(3), beta(3), gamma(1), delta(1), epsilon(1). CF(0) has three main subunits: a(1), b(2) and c(9-12). The alpha and beta chains form an alternating ring which encloses part of the gamma chain. CF(1) is attached to CF(0) by a central stalk formed by the gamma and epsilon chains, while a peripheral stalk is formed by the delta and b chains.

Its subcellular location is the cell membrane. It catalyses the reaction ATP + H2O + 4 H(+)(in) = ADP + phosphate + 5 H(+)(out). Functionally, produces ATP from ADP in the presence of a proton gradient across the membrane. The alpha chain is a regulatory subunit. This chain is ATP synthase subunit alpha, found in Mycoplasma capricolum subsp. capricolum (strain California kid / ATCC 27343 / NCTC 10154).